Reading from the N-terminus, the 67-residue chain is SPbeta prophage-derived uncharacterized protein YopZ (67 aa).

The stretch at 1–40 (MTSEMQLQAQIDVIEKENKELRRRNEELGQTVECQNKQIV) forms a coiled coil. The helical transmembrane segment at 44–66 (WRLLFFASSWIVYGIVSAIKYLW) threads the bilayer.

The protein localises to the cell membrane. In Bacillus subtilis (strain 168), this protein is SPbeta prophage-derived uncharacterized protein YopZ (yopZ).